The primary structure comprises 201 residues: NADH-quinone oxidoreductase subunit I (201 aa).

4Fe-4S ferredoxin-type domains are found at residues 78–107 (MSYEKAKSRCVACYMCQTACPMPTLFRIEA) and 116–147 (KVVRFDMNLLNCLFCGLCVDACPVGCLTMTDI). C87, C90, C93, C97, C127, C130, C133, and C137 together coordinate [4Fe-4S] cluster.

This sequence belongs to the complex I 23 kDa subunit family. As to quaternary structure, NDH-1 is composed of 14 different subunits. Subunits NuoA, H, J, K, L, M, N constitute the membrane sector of the complex. [4Fe-4S] cluster serves as cofactor.

It is found in the cell inner membrane. The enzyme catalyses a quinone + NADH + 5 H(+)(in) = a quinol + NAD(+) + 4 H(+)(out). NDH-1 shuttles electrons from NADH, via FMN and iron-sulfur (Fe-S) centers, to quinones in the respiratory chain. The immediate electron acceptor for the enzyme in this species is believed to be ubiquinone. Couples the redox reaction to proton translocation (for every two electrons transferred, four hydrogen ions are translocated across the cytoplasmic membrane), and thus conserves the redox energy in a proton gradient. In Aquifex aeolicus (strain VF5), this protein is NADH-quinone oxidoreductase subunit I.